Consider the following 701-residue polypeptide: DUF724 domain-containing protein 6 (701 aa).

2 disordered regions span residues 299-353 (MKTK…KRAN) and 374-452 (VEPV…DESC). The span at 326-340 (LNLEKSAETLTKAES) shows a compositional bias: basic and acidic residues. Over residues 381–399 (RVRTATPLKQTKADTQGKS) the composition is skewed to polar residues. 3 stretches are compositionally biased toward basic and acidic residues: residues 403–412 (KTLEPMRDEN), 421–430 (KVLEEKNSEK), and 437–449 (RQEE…KETD). In terms of domain architecture, DUF724 spans 514-700 (LPFAKKSPFW…LEFQSTASAP (187 aa)). The stretch at 626-670 (LEKKIEAGEIEGHTYEEEMAELELKILELKRQQVVAKEMKEATDK) forms a coiled coil.

In terms of tissue distribution, expressed in roots, stems and flowers.

The protein localises to the nucleus. May be involved in the polar growth of plant cells via transportation of RNAs. The protein is DUF724 domain-containing protein 6 of Arabidopsis thaliana (Mouse-ear cress).